Here is a 288-residue protein sequence, read N- to C-terminus: Prohibitin-2 (288 aa).

The chain crosses the membrane as a helical; Signal-anchor for type II membrane protein span at residues 21-43 (GKYAFTGTGLLLALGLAGFAVQT). The short motif at 125–128 (YRTL) is the AIM element.

This sequence belongs to the prohibitin family. The mitochondrial prohibitin complex consists of two subunits (phb1 and phb2). The subunits assemble into a membrane-associated ring-shaped supercomplex of approximately 1 mDa.

The protein resides in the mitochondrion inner membrane. Prohibitin probably acts as a holdase/unfoldase for the stabilization of newly synthesized mitochondrial proteins. Involved in mitophagy; may act as an adapter for atg8 that supports mitophagosome assembly. Negatively regulates the proteolytic processing of atg32 via the i-AAA protease. Acts as a negative regulator of the m-AAA protease. This Schizosaccharomyces pombe (strain 972 / ATCC 24843) (Fission yeast) protein is Prohibitin-2 (phb2).